Consider the following 390-residue polypeptide: Two-component response regulator ORR29 (390 aa).

Positions 13–130 (SAMVIDEDKC…TIKNLWQYVD (118 aa)) constitute a Response regulatory domain. Position 65 is a 4-aspartylphosphate (Asp-65). The myb-like GARP DNA-binding region spans 169 to 226 (KKYYLMWTPHLQKKFLHALQILGKDASPKNIKKIMGVDNIDCRQIAAHLQKHRLRLTK). 2 disordered regions span residues 233–271 (FTTD…QPTE) and 303–339 (SKHS…SGDH). The segment covering 257 to 271 (NASTLQPRSNTQPTE) has biased composition (polar residues).

Belongs to the ARR family. Type-B subfamily. Post-translationally, two-component system major event consists of a His-to-Asp phosphorelay between a sensor histidine kinase (HK) and a response regulator (RR). In plants, the His-to-Asp phosphorelay involves an additional intermediate named Histidine-containing phosphotransfer protein (HPt). This multistep phosphorelay consists of a His-Asp-His-Asp sequential transfer of a phosphate group between first a His and an Asp of the HK protein, followed by the transfer to a conserved His of the HPt protein and finally the transfer to an Asp in the receiver domain of the RR protein.

The protein localises to the nucleus. Transcriptional activator that binds specific DNA sequence. Functions as a response regulator involved in His-to-Asp phosphorelay signal transduction system. Phosphorylation of the Asp residue in the receiver domain activates the ability of the protein to promote the transcription of target genes. May directly activate some type-A response regulators in response to cytokinins. The chain is Two-component response regulator ORR29 from Oryza sativa subsp. indica (Rice).